A 299-amino-acid polypeptide reads, in one-letter code: Probable alpha-L-glutamate ligase (299 aa).

Residues Leu112 to Glu294 enclose the ATP-grasp domain. ATP-binding positions include Lys148, Asp185–Phe186, Asp194, and Arg218–Asn220. Mg(2+) contacts are provided by Asp255, Glu267, and Asn269. Positions 255, 267, and 269 each coordinate Mn(2+).

This sequence belongs to the RimK family. Requires Mg(2+) as cofactor. It depends on Mn(2+) as a cofactor.

The polypeptide is Probable alpha-L-glutamate ligase (Histophilus somni (strain 2336) (Haemophilus somnus)).